A 515-amino-acid polypeptide reads, in one-letter code: Protein disulfide-isomerase (515 aa).

An N-terminal signal peptide occupies residues 1-20 (MRSFAPWLVSLLGASAVVAA). 2 Thioredoxin domains span residues 21-132 (ADTE…QSLP) and 339-470 (VLDG…ENGK). Catalysis depends on nucleophile residues C54, C57, C389, and C392. Disulfide bonds link C54–C57 and C389–C392. The segment at 478-515 (VASEETQEGGDVTEAAPSATEAETPAATDDEKAEHDEL) is disordered. A compositionally biased stretch (low complexity) spans 490–504 (TEAAPSATEAETPAA). Residues 506 to 515 (DDEKAEHDEL) are compositionally biased toward basic and acidic residues. The Prevents secretion from ER motif lies at 512–515 (HDEL).

The protein belongs to the protein disulfide isomerase family.

The protein localises to the endoplasmic reticulum lumen. It catalyses the reaction Catalyzes the rearrangement of -S-S- bonds in proteins.. Its function is as follows. Participates in the folding of proteins containing disulfide bonds, may be involved in glycosylation, prolyl hydroxylation and triglyceride transfer. The polypeptide is Protein disulfide-isomerase (pdiA) (Aspergillus niger).